We begin with the raw amino-acid sequence, 37 residues long: Cytochrome b6-f complex subunit 5 (37 aa).

Residues 5–25 (FLFGIVLGLIPVTLAGLFVTA) traverse the membrane as a helical segment.

It belongs to the PetG family. The 4 large subunits of the cytochrome b6-f complex are cytochrome b6, subunit IV (17 kDa polypeptide, PetD), cytochrome f and the Rieske protein, while the 4 small subunits are PetG, PetL, PetM and PetN. The complex functions as a dimer.

The protein resides in the plastid. Its subcellular location is the chloroplast thylakoid membrane. Component of the cytochrome b6-f complex, which mediates electron transfer between photosystem II (PSII) and photosystem I (PSI), cyclic electron flow around PSI, and state transitions. PetG is required for either the stability or assembly of the cytochrome b6-f complex. The polypeptide is Cytochrome b6-f complex subunit 5 (Daucus carota (Wild carrot)).